Reading from the N-terminus, the 217-residue chain is Phosphoenolpyruvate guanylyltransferase (217 aa).

Phosphoenolpyruvate-binding residues include Thr-150, Gly-165, and Ser-168.

Belongs to the CofC family.

It catalyses the reaction phosphoenolpyruvate + GTP + H(+) = enolpyruvoyl-2-diphospho-5'-guanosine + diphosphate. Its pathway is cofactor biosynthesis; coenzyme F420 biosynthesis. In terms of biological role, guanylyltransferase that catalyzes the activation of phosphoenolpyruvate (PEP) as enolpyruvoyl-2-diphospho-5'-guanosine, via the condensation of PEP with GTP. It is involved in the biosynthesis of coenzyme F420, a hydride carrier cofactor. The sequence is that of Phosphoenolpyruvate guanylyltransferase from Mycobacterium ulcerans (strain Agy99).